A 363-amino-acid polypeptide reads, in one-letter code: tRNA N6-adenosine threonylcarbamoyltransferase (363 aa).

Positions 121 and 125 each coordinate Fe cation. Residues 143–147 (LASGG), Asp176, Gly189, and Asn287 each bind substrate. Asp315 contacts Fe cation.

It belongs to the KAE1 / TsaD family. Fe(2+) serves as cofactor.

It is found in the cytoplasm. The enzyme catalyses L-threonylcarbamoyladenylate + adenosine(37) in tRNA = N(6)-L-threonylcarbamoyladenosine(37) in tRNA + AMP + H(+). In terms of biological role, required for the formation of a threonylcarbamoyl group on adenosine at position 37 (t(6)A37) in tRNAs that read codons beginning with adenine. Is involved in the transfer of the threonylcarbamoyl moiety of threonylcarbamoyl-AMP (TC-AMP) to the N6 group of A37, together with TsaE and TsaB. TsaD likely plays a direct catalytic role in this reaction. The protein is tRNA N6-adenosine threonylcarbamoyltransferase of Rhodopseudomonas palustris (strain BisA53).